We begin with the raw amino-acid sequence, 142 residues long: Hemoglobin anodic subunit alpha (142 aa).

The residue at position 1 (S1) is an N-acetylserine. The Globin domain occupies 1 to 142 (SLSTKDKAVV…LALALADRYR (142 aa)). H59 serves as a coordination point for O2. H88 contacts heme b.

The protein belongs to the globin family. In terms of assembly, heterotetramer of two alpha chains and two beta chains. Red blood cells.

In terms of biological role, involved in oxygen transport from gills to the various peripheral tissues. This is Hemoglobin anodic subunit alpha from Gymnothorax unicolor (Brown moray).